Here is a 719-residue protein sequence, read N- to C-terminus: DNA replication licensing factor MCM7 (719 aa).

Ala-2 bears the N-acetylalanine mark. Residues Lys-15 and Lys-28 each participate in a glycyl lysine isopeptide (Lys-Gly) (interchain with G-Cter in SUMO2) cross-link. A phosphoserine mark is found at Ser-121 and Ser-314. An MCM domain is found at 332-538 (FYEKLAASIA…NDLRLAQHIT (207 aa)). ATP is bound at residue Tyr-345. Phosphoserine is present on Ser-365. Residues Gly-384, Ala-386, Lys-387, Ser-388, and Asn-489 each contribute to the ATP site. Ser-500 is subject to Phosphoserine. An Arginine finger motif is present at residues 513 to 516 (SRFD). Residue Arg-514 coordinates ATP. The segment at 521 to 564 (IQDRPDRDNDLRLAQHITYVHQHSRQPPAQFEPLDMKLMRRYIA) is interaction with RAD17. The tract at residues 577–719 (LADYITAAYV…NTARTRITFV (143 aa)) is interaction with ATRIP. Residue Arg-604 coordinates ATP. Phosphoserine is present on Ser-678.

The protein belongs to the MCM family. As to quaternary structure, component of the MCM2-7 complex. The complex forms a toroidal hexameric ring with the proposed subunit order MCM2-MCM6-MCM4-MCM7-MCM3-MCM5. Component of the CMG helicase complex, a hexameric ring of related MCM2-7 subunits stabilized by CDC45 and the tetrameric GINS complex. Interacts with the ATR-ATRIP complex and with RAD17. Interacts with TIPIN. Interacts with MCMBP. Interacts with ANKRD17. Component of the replisome complex composed of at least DONSON, MCM2, MCM7, PCNA and TICRR. In terms of processing, O-glycosylated (O-GlcNAcylated), in a cell cycle-dependent manner. Post-translationally, ubiquitinated by ECS(LRR1) E3 ubiquitin-protein ligase complex when forks converge following formation of DNA interstrand cross-links. During mitosis, ubiquitinated by TRAIP when forks converge following formation of DNA interstrand cross-links. Short ubiquitin chains on MCM7 promote recruitment of DNA glycosylase NEIL3. If the interstrand cross-link cannot be cleaved by NEIL3, the ubiquitin chains continue to grow on MCM7, promoting the unloading of the CMG helicase complex by the VCP/p97 ATPase.

The protein localises to the nucleus. It is found in the chromosome. It catalyses the reaction ATP + H2O = ADP + phosphate + H(+). Acts as a component of the MCM2-7 complex (MCM complex) which is the replicative helicase essential for 'once per cell cycle' DNA replication initiation and elongation in eukaryotic cells. Core component of CDC45-MCM-GINS (CMG) helicase, the molecular machine that unwinds template DNA during replication, and around which the replisome is built. The active ATPase sites in the MCM2-7 ring are formed through the interaction surfaces of two neighboring subunits such that a critical structure of a conserved arginine finger motif is provided in trans relative to the ATP-binding site of the Walker A box of the adjacent subunit. The six ATPase active sites, however, are likely to contribute differentially to the complex helicase activity. Required for S-phase checkpoint activation upon UV-induced damage. The sequence is that of DNA replication licensing factor MCM7 (MCM7) from Bos taurus (Bovine).